The primary structure comprises 416 residues: Diaminopimelate decarboxylase (416 aa).

K60 is subject to N6-(pyridoxal phosphate)lysine. Pyridoxal 5'-phosphate contacts are provided by residues G240 and 274-277; that span reads EPGR. R277, R313, and Y317 together coordinate substrate. Residue C343 is the Proton donor of the active site. Substrate is bound by residues E344 and Y371. Y371 contacts pyridoxal 5'-phosphate.

Belongs to the Orn/Lys/Arg decarboxylase class-II family. LysA subfamily. Homodimer. It depends on pyridoxal 5'-phosphate as a cofactor.

It catalyses the reaction meso-2,6-diaminopimelate + H(+) = L-lysine + CO2. It participates in amino-acid biosynthesis; L-lysine biosynthesis via DAP pathway; L-lysine from DL-2,6-diaminopimelate: step 1/1. In terms of biological role, specifically catalyzes the decarboxylation of meso-diaminopimelate (meso-DAP) to L-lysine. The protein is Diaminopimelate decarboxylase of Pseudomonas fluorescens.